Reading from the N-terminus, the 492-residue chain is Fibroblast growth factor receptor substrate 3 (492 aa).

A lipid anchor (N-myristoyl glycine) is attached at G2. Residues 13–115 (VPHNHPTKFK…QCNSINVTEE (103 aa)) form the IRS-type PTB domain. Disordered stretches follow at residues 122-230 (SSHP…SDQR), 328-414 (LPPV…PPRQ), 426-454 (GTARPKGPQNPSVSGAPGPTPHPVRSSDS), and 469-492 (LQRALPRDDGAVRKTRHNSTDLPL). The span at 371 to 382 (QKPTSTRASARS) shows a compositional bias: polar residues.

As to quaternary structure, binds NGFR, GRB2, PTPN11 and ERK2. Binds FGFR1 and NTRK1. Post-translationally, phosphorylated on tyrosine residues upon stimulation by BFGF or NGFB. Phosphorylated by ULK2 in vitro.

It is found in the membrane. Its function is as follows. Adapter protein that links FGF and NGF receptors to downstream signaling pathways. Involved in the activation of MAP kinases. Down-regulates ERK2 signaling by interfering with the phosphorylation and nuclear translocation of ERK2. The chain is Fibroblast growth factor receptor substrate 3 (Frs3) from Mus musculus (Mouse).